We begin with the raw amino-acid sequence, 308 residues long: Maspardin (308 aa).

The AB hydrolase-1 domain maps to 87–159 (FCDGFRKLLD…NSFWLMPAFM (73 aa)). Ser304 is modified (phosphoserine).

Belongs to the AB hydrolase superfamily. In terms of assembly, interacts with CD4. Interacts with ALDH16A1. Expressed in all tissues tested, including heart, brain, placenta, lung, liver, skeletal muscle, kidney and pancreas. Expressed in J.CaM1.6, HuT 78 and HeLa cell lines (at protein level).

It is found in the cytoplasm. Its subcellular location is the cytosol. The protein localises to the membrane. It localises to the endosome membrane. The protein resides in the golgi apparatus. It is found in the trans-Golgi network membrane. Functionally, may play a role as a negative regulatory factor in CD4-dependent T-cell activation. This Homo sapiens (Human) protein is Maspardin (SPG21).